Consider the following 222-residue polypeptide: Glutathione S-transferase alpha-2 (222 aa).

Residues 3–83 enclose the GST N-terminal domain; that stretch reads GKPVLHYFNA…YIATKYDLYG (81 aa). Lys-4 carries the post-translational modification N6-succinyllysine. Residues Tyr-9, Lys-45, 54–55, and 67–68 each bind glutathione; these read QV and QT. A GST C-terminal domain is found at 85 to 208; it reads DMKERALIDM…QPGSQRKPAM (124 aa).

It belongs to the GST superfamily. Alpha family. As to quaternary structure, homodimer or heterodimer of GSTA1 and GSTA2.

The protein localises to the cytoplasm. It carries out the reaction RX + glutathione = an S-substituted glutathione + a halide anion + H(+). Catalyzes the conjugation of glutathione to a large variety of electrophilic compounds. This is Glutathione S-transferase alpha-2 (Gsta2) from Rattus norvegicus (Rat).